The following is a 235-amino-acid chain: MKFPTDLIEGRLVKRYKRFFADVELADGEVVTAHCANTGAMTGIKTPGLPVWLSRSDNPKRKLKYTWELVEAEGTLIGALPNLANSLAEEAVNAGVISELTGYDSLRREVKYGENSRIDLLLEGNDRPPCWVEVKNVHWQRGPGIAEFPDGVTSRGAKHLVELANQVQAGERAVQLFIVQRSDCDVLRPAEDIDPVYARTLRDSAAAGVEVLAYACEVSPTAVIIHRPMRVELSQ.

This sequence belongs to the SfsA family.

This is Sugar fermentation stimulation protein homolog from Maricaulis maris (strain MCS10) (Caulobacter maris).